The primary structure comprises 102 residues: Exocrine gland-secreted peptide 1 (102 aa).

Positions 1 to 22 are cleaved as a signal peptide; sequence MTSLPVLLFLIILLLPSMITEG. A disulfide bridge links cysteine 63 with cysteine 95.

The protein belongs to the exocrine gland-secreted peptide family. In terms of assembly, monomer. In terms of tissue distribution, expressed in the extraorbital lacrimal gland from where it is secreted into tears.

It is found in the secreted. Its function is as follows. Male-specific phermone which is recognized by the Vmn2r116/V2rp5 receptor in the vomeronasal organ (VNO) and enhances female sexual receptive behavior (lordosis) upon male mounting, resulting in successful copulation. The polypeptide is Exocrine gland-secreted peptide 1 (Mus musculus (Mouse)).